The sequence spans 326 residues: Pyruvate dehydrogenase E1 component subunit alpha (326 aa).

In terms of assembly, heterodimer of an alpha and a beta chain. The cofactor is thiamine diphosphate.

It carries out the reaction N(6)-[(R)-lipoyl]-L-lysyl-[protein] + pyruvate + H(+) = N(6)-[(R)-S(8)-acetyldihydrolipoyl]-L-lysyl-[protein] + CO2. In terms of biological role, the pyruvate dehydrogenase complex catalyzes the overall conversion of pyruvate to acetyl-CoA and CO(2). It contains multiple copies of three enzymatic components: pyruvate dehydrogenase (E1), dihydrolipoamide acetyltransferase (E2) and lipoamide dehydrogenase (E3). In Rickettsia typhi (strain ATCC VR-144 / Wilmington), this protein is Pyruvate dehydrogenase E1 component subunit alpha (pdhA).